The following is a 507-amino-acid chain: Maturase K (507 aa).

It belongs to the intron maturase 2 family. MatK subfamily.

Its subcellular location is the plastid. The protein resides in the chloroplast. Usually encoded in the trnK tRNA gene intron. Probably assists in splicing its own and other chloroplast group II introns. This Lyonia ferruginea (Rusty staggerbush) protein is Maturase K.